A 414-amino-acid chain; its full sequence is MSDLRRKRVKTNPIPDHVPPALVRHFSLFTSPGMAPTPNGDPHAAVACVHDDGPPIFYSPSNTRDGRGTWVITRARDQRRVLEDTETFSSHRSIFASALGEHWPVIPLELDPPAHGVFRALLNPLFSSRRVLALEPTIHARAGALIDCIAKEKTSCDVMKDFALPFTFSVFLSFLGLSQRRSEVLVGWVSDLLHGNAEKRRAAARSVVAFIDEMAAMRRKSPAVDFMTFVVQAKIEGRSLTEEEVRGIGVLFLVAGLDTVAAAIGFDMAYLARNPKHQELLRNEPARLGLAAEELLRAYSTVQIIRVATKDIEFEGVPIREGDYVSCPAMIANRDPSEFKCPNTIDLARQDNQHTAFGYGPHLCHGAHLARREIVIGLREWLARIPAFRIKEGTAPITHGGHVFGISNIILTWA.

Cysteine 364 lines the heme pocket.

It belongs to the cytochrome P450 family. It depends on heme as a cofactor.

Cytochromes P450 are a group of heme-thiolate monooxygenases. They oxidize a variety of structurally unrelated compounds, including steroids, fatty acids, and xenobiotics. This is Probable cytochrome P450 127A1 (cyp127A1) from Sinorhizobium fredii (strain NBRC 101917 / NGR234).